The sequence spans 296 residues: Probable alpha-L-glutamate ligase (296 aa).

The 184-residue stretch at 104–287 (LQLLARQGID…IATLMITFIE (184 aa)) folds into the ATP-grasp domain. Residues K141, 178–179 (EF), D187, and 211–213 (RSN) each bind ATP. Mg(2+) contacts are provided by D248, E260, and N262. Mn(2+) is bound by residues D248, E260, and N262.

It belongs to the RimK family. Mg(2+) serves as cofactor. Requires Mn(2+) as cofactor.

The sequence is that of Probable alpha-L-glutamate ligase from Sodalis glossinidius (strain morsitans).